We begin with the raw amino-acid sequence, 792 residues long: Homeobox protein HAZ1 (792 aa).

The segment at 1 to 154 is disordered; sequence MDKTTTSDLV…RPPKGGTPKD (154 aa). A compositionally biased stretch (polar residues) spans 15–36; sequence NIGSNAGSAQEPLTTNGKTSGV. The segment covering 38-49 has biased composition (basic residues); the sequence is NRYKQTVKRGRK. Positions 51–67 are enriched in polar residues; that stretch reads SQISPSKTYPLRSSHSN. Residues 95 to 104 show a composition bias toward basic residues; the sequence is VAKKRKRSKP. Residues 116-127 are compositionally biased toward basic and acidic residues; it reads TSEKKNKAHNEL. A PHD-type zinc finger spans residues 244–301; the sequence is DIFCAACGSKDVTLKNDIILCDGICDRGFHQYCLNPPLLAEDIPQGDEGWLCPACDCK. Disordered stretches follow at residues 338-495 and 529-599; these read QIDA…NSNL and YGKA…SDQQ. Positions 345–354 are enriched in acidic residues; sequence PSDDSADNDY. The segment covering 362–371 has biased composition (basic and acidic residues); sequence HKVDEEKSSG. Composition is skewed to acidic residues over residues 373–389 and 433–453; these read DGGEGLDSDDSSSEDSE and DESNSDQSDESDFTSDSDDFC. The homeobox DNA-binding region spans 610–669; that stretch reads STAKNRHFGPAINQKLKAHFKEDPYPSRATKENLAQELGLTFNQVTKWFSSTRHYARVAA. Disordered stretches follow at residues 677–697 and 711–792; these read ENHTAENNNNTNTVDSIQLRG and SEER…KTGR. 2 stretches are compositionally biased toward polar residues: residues 716–737 and 746–760; these read GQSNLNEGTPLRSDTSCGQSVA and NQGNDSSSNVRTPNA. Basic and acidic residues predominate over residues 774–792; that stretch reads DEARRKAVQRELRKMKTGR.

Belongs to the PHD-associated homeobox family. In terms of tissue distribution, expressed in roots, leaves, stems, panicle and seeds.

Its subcellular location is the nucleus. In terms of biological role, transcriptional repressor involved in the regulation of gibberrelin (GA) signaling. Binds to the 5'-GATC-3' motif of HD16/EL1 promoter. Functions as a positive regulator of GA signaling by suppressing the expression of HD16/EL1, a negative regulator of GA signaling. In Oryza sativa subsp. japonica (Rice), this protein is Homeobox protein HAZ1.